A 172-amino-acid chain; its full sequence is 3-hydroxydecanoyl-[acyl-carrier-protein] dehydratase (172 aa).

The active site involves His71.

This sequence belongs to the thioester dehydratase family. FabA subfamily. As to quaternary structure, homodimer.

The protein localises to the cytoplasm. It carries out the reaction a (3R)-hydroxyacyl-[ACP] = a (2E)-enoyl-[ACP] + H2O. It catalyses the reaction (3R)-hydroxydecanoyl-[ACP] = (2E)-decenoyl-[ACP] + H2O. The catalysed reaction is (2E)-decenoyl-[ACP] = (3Z)-decenoyl-[ACP]. It participates in lipid metabolism; fatty acid biosynthesis. Its function is as follows. Necessary for the introduction of cis unsaturation into fatty acids. Catalyzes the dehydration of (3R)-3-hydroxydecanoyl-ACP to E-(2)-decenoyl-ACP and then its isomerization to Z-(3)-decenoyl-ACP. Can catalyze the dehydratase reaction for beta-hydroxyacyl-ACPs with saturated chain lengths up to 16:0, being most active on intermediate chain length. This Blochmanniella pennsylvanica (strain BPEN) protein is 3-hydroxydecanoyl-[acyl-carrier-protein] dehydratase.